The sequence spans 1041 residues: Isoleucine--tRNA ligase (1041 aa).

The 'HIGH' region signature appears at 53–63 (PFANGLPHYGH). The 'KMSKS' region motif lies at 619 to 623 (KMSKS). Lys-622 provides a ligand contact to ATP.

The protein belongs to the class-I aminoacyl-tRNA synthetase family. IleS type 2 subfamily. As to quaternary structure, monomer. It depends on Zn(2+) as a cofactor.

It is found in the cytoplasm. The enzyme catalyses tRNA(Ile) + L-isoleucine + ATP = L-isoleucyl-tRNA(Ile) + AMP + diphosphate. In terms of biological role, catalyzes the attachment of isoleucine to tRNA(Ile). As IleRS can inadvertently accommodate and process structurally similar amino acids such as valine, to avoid such errors it has two additional distinct tRNA(Ile)-dependent editing activities. One activity is designated as 'pretransfer' editing and involves the hydrolysis of activated Val-AMP. The other activity is designated 'posttransfer' editing and involves deacylation of mischarged Val-tRNA(Ile). The sequence is that of Isoleucine--tRNA ligase (ileS) from Mycobacterium tuberculosis (strain CDC 1551 / Oshkosh).